A 702-amino-acid polypeptide reads, in one-letter code: Elongation factor G (702 aa).

A tr-type G domain is found at Glu8–Val290. GTP is bound by residues Ala17–Thr24, Asp88–His92, and Asn142–Asp145.

It belongs to the TRAFAC class translation factor GTPase superfamily. Classic translation factor GTPase family. EF-G/EF-2 subfamily.

Its subcellular location is the cytoplasm. Functionally, catalyzes the GTP-dependent ribosomal translocation step during translation elongation. During this step, the ribosome changes from the pre-translocational (PRE) to the post-translocational (POST) state as the newly formed A-site-bound peptidyl-tRNA and P-site-bound deacylated tRNA move to the P and E sites, respectively. Catalyzes the coordinated movement of the two tRNA molecules, the mRNA and conformational changes in the ribosome. The polypeptide is Elongation factor G (Acidovorax sp. (strain JS42)).